Consider the following 925-residue polypeptide: MDYSKTLALPKTEFPMRGNLPSREPQMQAVWEEQNIYQQVLDRTKDRPSFVLHDGPPYANGDIHIGHALNKILKDFIVRYKSMAGFYAPYIPGWDTHGLPIEQAIINAQGLDRRSIEVNDFRQRCEEYAWSYIDKQRDQFKRLGVRGDWENPYVTLLPEYEANQIRVFGEMAKKGYIYKGLRCVYWSPSSETALADAEIEYKDKRSPSIYVSFQVADGKGKLDIETGVVIWTTTPWTLPANLAISLHPELEYNVVKVDGRKFLVANGLIEAASKEIGWEGVEILATFKGQELEGVETQHPFYDRKSPLILGEHVTLDAGTGCVHTAPGHGEDDFNVGQKYNLGVLCPVDHEGKMTNEAPGFEGLFYEDANKVITEKLKENGALLKLSFFTHSYPHDWRTKKPVIYRATEQWFASIDGFRTQMLEAIKNVKWIPHWGETRLANMIADRGDWCISRQRVWGVPIPIFYCKACNEPIINDTTINHVADLFRKEGSKVWFSREANELVPEGLSCTKCDCNDFRKETDIMDVWFDSGSSHQAVLRERGIAWPADMYLEGSDQYRGWFNSSLSTGVAVYGTAPYKSVLSHGFALDGEGRKMSKSLGNVIVPQQVIDKMGADILRLWVASVDYQADVRISDAILNQIAEVYRKIRNTFRFLLGNLDGFNPATDRVAYEELGELDRYVLAKAAKVAKRTRKAYDEYQFHTVFHAVHNFCVIDLSAFYLDICKDRLYVEAPDSLKRRAAQTVMYDCLLSLVKLVAPLLPHTADEVWAFIPGVEEKSVQLTDMPEGDEQHLSFAAEAESKWDAFLAIRDEVLKAMEEARRNKVFGNSVDAKLALYPQTEEVAKTLAAMDDLADLFIVAHVDVHSGSAPAEAVQLEGIAAVVSAADGGKCERCRVVKPDVGTRESHASLCVRCADVVEQHYAHVTE.

The short motif at 57 to 67 (PYANGDIHIGH) is the 'HIGH' region element. Residue Glu-553 coordinates L-isoleucyl-5'-AMP. Positions 594 to 598 (KMSKS) match the 'KMSKS' region motif. Lys-597 provides a ligand contact to ATP. Zn(2+)-binding residues include Cys-889, Cys-892, Cys-909, and Cys-912.

It belongs to the class-I aminoacyl-tRNA synthetase family. IleS type 1 subfamily. In terms of assembly, monomer. The cofactor is Zn(2+).

The protein localises to the cytoplasm. It catalyses the reaction tRNA(Ile) + L-isoleucine + ATP = L-isoleucyl-tRNA(Ile) + AMP + diphosphate. Its function is as follows. Catalyzes the attachment of isoleucine to tRNA(Ile). As IleRS can inadvertently accommodate and process structurally similar amino acids such as valine, to avoid such errors it has two additional distinct tRNA(Ile)-dependent editing activities. One activity is designated as 'pretransfer' editing and involves the hydrolysis of activated Val-AMP. The other activity is designated 'posttransfer' editing and involves deacylation of mischarged Val-tRNA(Ile). The chain is Isoleucine--tRNA ligase from Brevibacillus brevis (strain 47 / JCM 6285 / NBRC 100599).